Consider the following 550-residue polypeptide: Chaperonin GroEL (550 aa).

Residues Thr30–Pro33, Lys51, Asp87–Thr91, Gly415, and Asp496 contribute to the ATP site. The tract at residues Pro526–Tyr550 is disordered. Residues Gly537–Tyr550 are compositionally biased toward gly residues.

This sequence belongs to the chaperonin (HSP60) family. As to quaternary structure, forms a cylinder of 14 subunits composed of two heptameric rings stacked back-to-back. Interacts with the co-chaperonin GroES.

It localises to the cytoplasm. The catalysed reaction is ATP + H2O + a folded polypeptide = ADP + phosphate + an unfolded polypeptide.. Functionally, together with its co-chaperonin GroES, plays an essential role in assisting protein folding. The GroEL-GroES system forms a nano-cage that allows encapsulation of the non-native substrate proteins and provides a physical environment optimized to promote and accelerate protein folding. In Chloroherpeton thalassium (strain ATCC 35110 / GB-78), this protein is Chaperonin GroEL.